The chain runs to 131 residues: Fimbrial assembly protein, serogroups C1 and C2 (131 aa).

The polypeptide is Fimbrial assembly protein, serogroups C1 and C2 (fimB) (Dichelobacter nodosus (Bacteroides nodosus)).